The chain runs to 231 residues: Large ribosomal subunit protein uL1 (231 aa).

The protein belongs to the universal ribosomal protein uL1 family. In terms of assembly, part of the 50S ribosomal subunit.

Functionally, binds directly to 23S rRNA. The L1 stalk is quite mobile in the ribosome, and is involved in E site tRNA release. Protein L1 is also a translational repressor protein, it controls the translation of the L11 operon by binding to its mRNA. In Staphylococcus carnosus (strain TM300), this protein is Large ribosomal subunit protein uL1.